A 503-amino-acid polypeptide reads, in one-letter code: Ribose import ATP-binding protein RbsA 1 (503 aa).

ABC transporter domains are found at residues 5-241 and 253-495; these read IALE…VGRA and IGQP…AGIE. 37–44 contacts ATP; the sequence is GENGAGKS.

Belongs to the ABC transporter superfamily. Ribose importer (TC 3.A.1.2.1) family. The complex is composed of an ATP-binding protein (RbsA), two transmembrane proteins (RbsC) and a solute-binding protein (RbsB).

The protein resides in the cell inner membrane. The enzyme catalyses D-ribose(out) + ATP + H2O = D-ribose(in) + ADP + phosphate + H(+). Its function is as follows. Part of the ABC transporter complex RbsABC involved in ribose import. Responsible for energy coupling to the transport system. This Rhizobium meliloti (strain 1021) (Ensifer meliloti) protein is Ribose import ATP-binding protein RbsA 1.